Here is a 370-residue protein sequence, read N- to C-terminus: UDP-N-acetylglucosamine--N-acetylmuramyl-(pentapeptide) pyrophosphoryl-undecaprenol N-acetylglucosamine transferase (370 aa).

UDP-N-acetyl-alpha-D-glucosamine contacts are provided by residues 10-12, asparagine 126, serine 200, isoleucine 255, and glutamine 300; that span reads TGG.

It belongs to the glycosyltransferase 28 family. MurG subfamily.

The protein localises to the cell membrane. The enzyme catalyses Mur2Ac(oyl-L-Ala-gamma-D-Glu-L-Lys-D-Ala-D-Ala)-di-trans,octa-cis-undecaprenyl diphosphate + UDP-N-acetyl-alpha-D-glucosamine = beta-D-GlcNAc-(1-&gt;4)-Mur2Ac(oyl-L-Ala-gamma-D-Glu-L-Lys-D-Ala-D-Ala)-di-trans,octa-cis-undecaprenyl diphosphate + UDP + H(+). It functions in the pathway cell wall biogenesis; peptidoglycan biosynthesis. In terms of biological role, cell wall formation. Catalyzes the transfer of a GlcNAc subunit on undecaprenyl-pyrophosphoryl-MurNAc-pentapeptide (lipid intermediate I) to form undecaprenyl-pyrophosphoryl-MurNAc-(pentapeptide)GlcNAc (lipid intermediate II). The sequence is that of UDP-N-acetylglucosamine--N-acetylmuramyl-(pentapeptide) pyrophosphoryl-undecaprenol N-acetylglucosamine transferase from Lactobacillus gasseri (strain ATCC 33323 / DSM 20243 / BCRC 14619 / CIP 102991 / JCM 1131 / KCTC 3163 / NCIMB 11718 / NCTC 13722 / AM63).